A 411-amino-acid chain; its full sequence is Protrudin (411 aa).

A disordered region spans residues 1 to 27 (MQTSEREGSGPELSPSVMPEAPLESPP). The Cytoplasmic portion of the chain corresponds to 1–66 (MQTSEREGSG…AGDGVRYLLR (66 aa)). A sufficient for homooligomerization region spans residues 1–92 (MQTSEREGSG…LFLTLNEGAW (92 aa)). Residues 1 to 205 (MQTSEREGSG…LYLLPLCWVL (205 aa)) form a sufficient for localization to endoplasmic reticulum tubular network and for interactions with REEP1, REEP5, ATL1, ATL2, ATL3 and SPAST region. The necessary for interaction with RAB11A and function in neurite outgrowth stretch occupies residues 51 to 64 (LEPLKDAGDGVRYL). A helical membrane pass occupies residues 67-87 (WQMPLCSLLTCLGLNVLFLTL). Residue Asn-88 is a topological domain, lumenal. The helical transmembrane segment at 89-109 (EGAWYSVGALMISVPALLGYL) threads the bilayer. Residues 110 to 187 (QEVCRARLPE…NPVVSSQFYG (78 aa)) are Cytoplasmic-facing. The helical intramembrane region spans 188–208 (ALLGTICMLYLLPLCWVLTLL). Over 209–411 (NSTLFLGNVE…CASCNQTLSK (203 aa)) the chain is Cytoplasmic. The segment at 234 to 286 (MNPKQEEHAFESPPPPDVGGKGGLMDSTPALTPTEDLTPGSVEEAEEAEPDEE) is disordered. The segment at 271 to 361 (TPGSVEEAEE…GCSATFSVLK (91 aa)) is necessary for interaction with KIF5A. Acidic residues predominate over residues 276–286 (EEAEEAEPDEE). The tract at residues 286-292 (EFKDAIE) is necessary for interaction with VAPA. Residues 344–410 (TNNFGNCTGC…VCASCNQTLS (67 aa)) form an FYVE-type zinc finger. Zn(2+) contacts are provided by Cys-350, Cys-353, Cys-366, Cys-369, Cys-374, Cys-377, Cys-402, and Cys-405.

Can form homooligomers (monomers, dimers and tetramers). Interacts with RAB11A (GDP-bound form); regulates RAB11A. Interacts with FKBP8; may negatively regulate ZFYVE27 phosphorylation. Interacts with VAPA (via MSP domain); may regulate ZFYVE27 retention in the endoplasmic reticulum and its function in cell projections formation. Interacts with VAPB (via MSP domain). Interacts with RAB11B (GDP-bound form), REEP1, REEP5, ATL1, ATL2, ATL3, SPAST, SURF4, KIF5A, KIF5B, KIF5C and RTN3. Phosphorylated. Phosphorylation is induced by NGF through the MAPK/ERK pathway and modulates interaction with RAB11A.

It localises to the recycling endosome membrane. The protein resides in the endoplasmic reticulum membrane. Its subcellular location is the cell projection. It is found in the growth cone membrane. Key regulator of RAB11-dependent vesicular trafficking during neurite extension through polarized membrane transport. Promotes axonal elongation and contributes to the establishment of neuronal cell polarity. Involved in nerve growth factor-induced neurite formation in VAPA-dependent manner. Contributes to both the formation and stabilization of the tubular ER network. Involved in ER morphogenesis by regulating the sheet-to-tubule balance and possibly the density of tubule interconnections. Acts as an adapter protein that facilitates the interaction of KIF5A with VAPA, VAPB, SURF4, RAB11A, RAB11B and RTN3 and the ZFYVE27-KIF5A complex contributes to the transport of these proteins in neurons. Can induce formation of neurite-like membrane protrusions in non-neuronal cells in a KIF5A/B-dependent manner. In Pongo abelii (Sumatran orangutan), this protein is Protrudin (ZFYVE27).